The chain runs to 198 residues: BPTI/Kunitz domain-containing protein 4 (198 aa).

Positions 1–19 are cleaved as a signal peptide; the sequence is MNLLVFFVYLXVCVIGSHS. Antistasin-like domains follow at residues 31–56, 56–85, 85–114, and 114–143; these read CGGA…ICKC, CRDA…TCEC, CKPL…TCFC, and CRPR…TCKC. Residues 146 to 196 enclose the BPTI/Kunitz inhibitor domain; the sequence is CLEPKKVGPCRALIPRYFYDVWSGKCKKFYWGGCQANGNNFKRKSQCCKRC. 3 disulfides stabilise this stretch: Cys-146/Cys-196, Cys-155/Cys-179, and Cys-171/Cys-192.

Nacreous layer of shell (at protein level).

Its subcellular location is the secreted. This chain is BPTI/Kunitz domain-containing protein 4, found in Margaritifera margaritifera (Freshwater pearl mussel).